A 436-amino-acid polypeptide reads, in one-letter code: MQLSVVDPTWELLDPNPDIRALFLEFNDTFFWGQLSGIEVKWSARMTLCAGVCSYEGRGGLCSIRLSEPLLKLRPRKDLVQTLLHEMIHALLFVTHNNKDHDSHGPEFCKHMERINKRTGANISVYHNFHDEVDEYRKHWWLCNGPCQKRKPYFGYVKRAMNRAPSSLDPWWADHQRTCGGEFVKIKEPENYSQKRKRNNDPTKSELGNSSHVKINKGKSNGVDIRTVIPFSGTGYKLFEPSKSDAQLKIQNDNPTKDKAVMHHTPPSTNQTDSTFLSRKIVSAKKISVANTKVFINLNGSPIKLPSSSNNKSHQDSSKQKSVLHFFKTQKDNSIDLTSSSQSFPSTSQGPNREETEHFYKKLQMDDKESKDTFIIHSLNKTNVSDSLNNKSCAGPAATINSGLNHTKVCCPVCGTEIFESKINDHLDTCLQNYNT.

The SprT-like domain maps to 19-186; the sequence is IRALFLEFND…RTCGGEFVKI (168 aa). His-85 serves as a coordination point for Zn(2+). Residue Glu-86 is part of the active site. Positions 89 and 104 each coordinate Zn(2+). Residues 184–219 are disordered; the sequence is VKIKEPENYSQKRKRNNDPTKSELGNSSHVKINKGK. The short motif at 231–239 is the SHP-box element; the sequence is FSGTGYKLF. The short motif at 271 to 277 is the PIP-box element; that stretch reads QTDSTFL. The segment at 300-321 is disordered; that stretch reads GSPIKLPSSSNNKSHQDSSKQK. The segment at 408-435 adopts a UBZ4-type zinc-finger fold; it reads KVCCPVCGTEIFESKINDHLDTCLQNYN. Residues Cys-411, Cys-414, His-426, and Cys-430 each coordinate Zn(2+).

It belongs to the Spartan family. As to quaternary structure, homodimer. Requires Zn(2+) as cofactor. In terms of processing, autocatalytically cleaved in response to double-stranded DNA-binding: autocatalytic cleavage takes place in trans and leads to inactivation.

It is found in the nucleus. It localises to the chromosome. DNA-binding activates the protease activity: single-stranded DNA-binding specifically activates ability to cleave covalent DNA-protein cross-links (DPCs). In contrast, double-stranded DNA-binding specifically activates autocatalytic cleavage, and subsequent inactivation. Its function is as follows. DNA-dependent metalloendopeptidase that mediates the proteolytic cleavage of covalent DNA-protein cross-links (DPCs) during DNA synthesis, thereby playing a key role in maintaining genomic integrity. DPCs are highly toxic DNA lesions that interfere with essential chromatin transactions, such as replication and transcription, and which are induced by reactive agents, such as UV light or formaldehyde. Associates with the DNA replication machinery and specifically removes DPCs during DNA synthesis. Catalyzes proteolytic cleavage of the hmces DNA-protein cross-link following unfolding by the brip1/fancj helicase. Acts as a pleiotropic protease for DNA-binding proteins cross-linked with DNA, such as top1, top2a, histones H3 and H4. Mediates degradation of DPCs that are not ubiquitinated, while it is not able to degrade ubiquitinated DPCs. SPRTN activation requires polymerase collision with DPCs followed by helicase bypass of DPCs. May also act as a 'reader' of ubiquitinated pcna: facilitates chromatin association of rad18 and is required for efficient pcna monoubiquitination, promoting a feed-forward loop to enhance pcna ubiquitination and translesion DNA synthesis. Acts as a regulator of translesion DNA synthesis by recruiting vcp/p97 to sites of DNA damage. This is DNA-dependent metalloprotease SPRTN from Xenopus tropicalis (Western clawed frog).